A 164-amino-acid chain; its full sequence is ATP synthase subunit b (164 aa).

The chain crosses the membrane as a helical span at residues 6–26 (GELVGNFILVTGSVIVLLLLI).

It belongs to the ATPase B chain family. As to quaternary structure, F-type ATPases have 2 components, F(1) - the catalytic core - and F(0) - the membrane proton channel. F(1) has five subunits: alpha(3), beta(3), gamma(1), delta(1), epsilon(1). F(0) has three main subunits: a(1), b(2) and c(10-14). The alpha and beta chains form an alternating ring which encloses part of the gamma chain. F(1) is attached to F(0) by a central stalk formed by the gamma and epsilon chains, while a peripheral stalk is formed by the delta and b chains.

The protein localises to the cell membrane. Functionally, f(1)F(0) ATP synthase produces ATP from ADP in the presence of a proton or sodium gradient. F-type ATPases consist of two structural domains, F(1) containing the extramembraneous catalytic core and F(0) containing the membrane proton channel, linked together by a central stalk and a peripheral stalk. During catalysis, ATP synthesis in the catalytic domain of F(1) is coupled via a rotary mechanism of the central stalk subunits to proton translocation. In terms of biological role, component of the F(0) channel, it forms part of the peripheral stalk, linking F(1) to F(0). The chain is ATP synthase subunit b from Streptococcus pyogenes serotype M6 (strain ATCC BAA-946 / MGAS10394).